Here is a 275-residue protein sequence, read N- to C-terminus: MTLQQQIIKALGAKPQINAEEEIRRSVDFLKSYLQTYPFIKSLVLGISGGQDSTLAGKLCQMAINELRLETGNESLQFIAVRLPYGVQADEQDCQDAIAFIQPDRVLTVNIKGAVLASEQALREAGIELSDFVRGNEKARERMKAQYSIAGMTSGVVVGTDHAAEAITGFFTKYGDGGTDINPLYRLNKRQGKQLLAALACPEHLYKKAPTADLEDDRPSLPDEVALGVTYDNIDDYLEGKNVPQQVARTIENWYLKTEHKRRPPITVFDDFWKK.

An ATP-binding site is contributed by 46–53; the sequence is GISGGQDS. Residue Asp-52 coordinates Mg(2+). Arg-140 serves as a coordination point for deamido-NAD(+). Thr-160 serves as a coordination point for ATP. A Mg(2+)-binding site is contributed by Glu-165. 2 residues coordinate deamido-NAD(+): Lys-173 and Asp-180. 2 residues coordinate ATP: Lys-189 and Thr-211. 260–261 is a binding site for deamido-NAD(+); it reads HK.

This sequence belongs to the NAD synthetase family. Homodimer.

It catalyses the reaction deamido-NAD(+) + NH4(+) + ATP = AMP + diphosphate + NAD(+) + H(+). It participates in cofactor biosynthesis; NAD(+) biosynthesis; NAD(+) from deamido-NAD(+) (ammonia route): step 1/1. Functionally, catalyzes the ATP-dependent amidation of deamido-NAD to form NAD. Uses ammonia as a nitrogen source. The protein is NH(3)-dependent NAD(+) synthetase of Escherichia coli (strain K12 / MC4100 / BW2952).